The primary structure comprises 416 residues: Isocitrate dehydrogenase [NADP] (416 aa).

Residues 77–79 and arginine 84 contribute to the NADP(+) site; that span reads TIT. Position 79 (threonine 79) interacts with substrate. Residues 96 to 102, arginine 111, and arginine 134 each bind substrate; that span reads SPNGTIR. Aspartate 254 provides a ligand contact to Mn(2+). Residue lysine 262 participates in NADP(+) binding. Aspartate 277 is a Mn(2+) binding site. Residues 312 to 317 and asparagine 330 contribute to the NADP(+) site; that span reads GTVTRH.

Belongs to the isocitrate and isopropylmalate dehydrogenases family. Heterodimer. The cofactor is Mg(2+). Mn(2+) serves as cofactor.

The protein localises to the cytoplasm. The enzyme catalyses D-threo-isocitrate + NADP(+) = 2-oxoglutarate + CO2 + NADPH. Its function is as follows. May supply 2-oxoglutarate for amino acid biosynthesis and ammonia assimilation via the glutamine synthetase/glutamate synthase (GS/GOGAT) pathway. The polypeptide is Isocitrate dehydrogenase [NADP] (ICDH-1) (Solanum tuberosum (Potato)).